The chain runs to 355 residues: MSGISAQLVKKLRDLTDAGMMDCKKALVEVAGDLQKAIDFLREKGLSKAAKKADRIAAEGVIALEVVPDFKSAMMVEINSETDFVAKNEGFKELVKKTLETIKAHNIHTTEELLKSPLDNKPFEEYLHSQIAVIGENILVRKIAHLKAPSFHIINGYAHSNARVGVLITIKYDNEKNAPKVVELARNIAMHAAAMKPQVLDSKDFSLDFVKKETLALIAEIEKDNEEAKRLGKPLKNIPTFGSRIELSDEVLAHQKKAFEDELKAQGKPEKIWDKIVPGKMERFIADNTLIDQRLTLLGQFYVMDDKKTIAQVVADCSKEWDDHLTITEYVRFELGEGIEKKAENFAEEVALQMK.

Positions 82–85 are involved in Mg(2+) ion dislocation from EF-Tu; the sequence is TDFV.

It belongs to the EF-Ts family.

The protein localises to the cytoplasm. In terms of biological role, associates with the EF-Tu.GDP complex and induces the exchange of GDP to GTP. It remains bound to the aminoacyl-tRNA.EF-Tu.GTP complex up to the GTP hydrolysis stage on the ribosome. The sequence is that of Elongation factor Ts from Helicobacter pylori (strain Shi470).